A 390-amino-acid chain; its full sequence is NADH-quinone oxidoreductase subunit D (390 aa).

Belongs to the complex I 49 kDa subunit family. In terms of assembly, NDH-1 is composed of 14 different subunits. Subunits NuoB, C, D, E, F, and G constitute the peripheral sector of the complex.

The protein resides in the cell inner membrane. It carries out the reaction a quinone + NADH + 5 H(+)(in) = a quinol + NAD(+) + 4 H(+)(out). Its function is as follows. NDH-1 shuttles electrons from NADH, via FMN and iron-sulfur (Fe-S) centers, to quinones in the respiratory chain. The immediate electron acceptor for the enzyme in this species is believed to be ubiquinone. Couples the redox reaction to proton translocation (for every two electrons transferred, four hydrogen ions are translocated across the cytoplasmic membrane), and thus conserves the redox energy in a proton gradient. The polypeptide is NADH-quinone oxidoreductase subunit D (Trichlorobacter lovleyi (strain ATCC BAA-1151 / DSM 17278 / SZ) (Geobacter lovleyi)).